The chain runs to 391 residues: F-box only protein 5 (391 aa).

In terms of domain architecture, F-box spans 198 to 245 (AELFHRDFKHLLTKILRHLSAMDLINVISVSTTWRKILQKDNSAYNSY). The segment at 318-366 (CLKVCVDCSSPAKYDPYLHRATCTRESCKFDFCTLCSCKYHGSKCCQTS) adopts a ZBR-type zinc-finger fold. Positions 322, 325, 340, 345, 350, 353, 358, and 363 each coordinate Zn(2+). The disordered stretch occupies residues 365–391 (TSKPRSYRVPSEPLPGSKKSKQNLRRL). Residues 382–391 (KKSKQNLRRL) show a composition bias toward basic residues.

Part of a SCF (SKP1-cullin-F-box) protein ligase complex. Interacts with btrc. Interacts with skp1. Interacts with cdc20. Interacts with pin1; stabilizes fbxo5 by preventing its association with btrc in an isomerization-dependent pathway; this interaction is present during G2 phase and prevents fbxo5 degradation. Interacts with plk1. Proteolysed; proteolysis is induced by both cyclin B-cdk1 and cyclin A-cdk1/2 complex through probable phosphorylation. Proteolysis is inhibited by pin1 during G2.

The protein localises to the nucleus. The protein resides in the cytoplasm. Its subcellular location is the cytoskeleton. It localises to the spindle. It is found in the microtubule organizing center. The protein localises to the centrosome. It participates in protein modification; protein ubiquitination. Regulates progression through early mitosis by inhibiting the anaphase promoting complex/cyclosome (APC). Binds to the APC activators cdc20 to prevent APC activation. Can also bind directly to the APC to inhibit substrate-binding. Required to arrest unfertilized eggs at metaphase of meiosis II, by preventing their release from metaphase of meiosis II, through inhibition of APC-dependent cyclin B destruction leading to stabilization of cyclin B-cdk1 complex activity. The protein is F-box only protein 5 of Xenopus tropicalis (Western clawed frog).